The sequence spans 319 residues: RWD domain-containing protein 2B (319 aa).

In terms of domain architecture, RWD spans 41–165 (SELDLLASMF…EWVREHASGY (125 aa)). Ser275 is modified (phosphoserine).

This chain is RWD domain-containing protein 2B (RWDD2B), found in Pongo abelii (Sumatran orangutan).